The primary structure comprises 338 residues: Ferrochelatase (338 aa).

His202 and Glu283 together coordinate Fe cation.

It belongs to the ferrochelatase family.

It is found in the cytoplasm. It catalyses the reaction heme b + 2 H(+) = protoporphyrin IX + Fe(2+). Its pathway is porphyrin-containing compound metabolism; protoheme biosynthesis; protoheme from protoporphyrin-IX: step 1/1. Its function is as follows. Catalyzes the ferrous insertion into protoporphyrin IX. The sequence is that of Ferrochelatase from Acinetobacter baumannii (strain ATCC 17978 / DSM 105126 / CIP 53.77 / LMG 1025 / NCDC KC755 / 5377).